The chain runs to 1166 residues: ATP-dependent helicase/deoxyribonuclease subunit B (1166 aa).

The 285-residue stretch at 1–285 folds into the UvrD-like helicase ATP-binding domain; that stretch reads MGAVFLSGRS…VRLEETKRHR (285 aa). 8–15 is a binding site for ATP; that stretch reads GRSGSGKT. One can recognise a UvrD-like helicase C-terminal domain in the interval 279–586; it reads EETKRHRHHP…KFALIPPALD (308 aa). [4Fe-4S] cluster-binding residues include Cys801, Cys1121, Cys1124, and Cys1130.

This sequence belongs to the helicase family. AddB/RexB type 1 subfamily. As to quaternary structure, heterodimer of AddA and AddB. Mg(2+) is required as a cofactor. [4Fe-4S] cluster serves as cofactor.

In terms of biological role, the heterodimer acts as both an ATP-dependent DNA helicase and an ATP-dependent, dual-direction single-stranded exonuclease. Recognizes the chi site generating a DNA molecule suitable for the initiation of homologous recombination. The AddB subunit has 5' -&gt; 3' nuclease activity but not helicase activity. In Bacillus licheniformis (strain ATCC 14580 / DSM 13 / JCM 2505 / CCUG 7422 / NBRC 12200 / NCIMB 9375 / NCTC 10341 / NRRL NRS-1264 / Gibson 46), this protein is ATP-dependent helicase/deoxyribonuclease subunit B.